A 325-amino-acid chain; its full sequence is Methionine import ATP-binding protein MetN 3 (325 aa).

Residues 2–239 (IEVQQLCKVY…PQSALGRALL (238 aa)) enclose the ABC transporter domain. 36–43 (GRSGAGKS) serves as a coordination point for ATP.

This sequence belongs to the ABC transporter superfamily. Methionine importer (TC 3.A.1.24) family. The complex is composed of two ATP-binding proteins (MetN), two transmembrane proteins (MetI) and a solute-binding protein (MetQ).

The protein localises to the cell inner membrane. It catalyses the reaction L-methionine(out) + ATP + H2O = L-methionine(in) + ADP + phosphate + H(+). The enzyme catalyses D-methionine(out) + ATP + H2O = D-methionine(in) + ADP + phosphate + H(+). Part of the ABC transporter complex MetNIQ involved in methionine import. Responsible for energy coupling to the transport system. The polypeptide is Methionine import ATP-binding protein MetN 3 (Pseudomonas fluorescens (strain ATCC BAA-477 / NRRL B-23932 / Pf-5)).